A 412-amino-acid chain; its full sequence is Argininosuccinate synthase (412 aa).

ATP contacts are provided by residues 16–24 (AYSGGLDTS) and Ala44. 2 residues coordinate L-citrulline: Tyr96 and Ser101. Gly126 contributes to the ATP binding site. Thr128, Asn132, and Asp133 together coordinate L-aspartate. Asn132 is a binding site for L-citrulline. 5 residues coordinate L-citrulline: Arg136, Ser185, Ser194, Glu270, and Tyr282.

This sequence belongs to the argininosuccinate synthase family. Type 1 subfamily. In terms of assembly, homotetramer.

It localises to the cytoplasm. The enzyme catalyses L-citrulline + L-aspartate + ATP = 2-(N(omega)-L-arginino)succinate + AMP + diphosphate + H(+). Its pathway is amino-acid biosynthesis; L-arginine biosynthesis; L-arginine from L-ornithine and carbamoyl phosphate: step 2/3. The protein is Argininosuccinate synthase of Shewanella baltica (strain OS185).